We begin with the raw amino-acid sequence, 372 residues long: Y-box-binding protein 3 (372 aa).

Residues 1-82 (MSEAGEATTT…LATAAGSEDA (82 aa)) are disordered. N-acetylserine is present on Ser2. At Ser2 the chain carries Phosphoserine. Positions 7–28 (ATTTTTTTLPQAPTEAAAAAPQ) are enriched in low complexity. Ser34 is subject to Phosphoserine. Positions 35–79 (PVGSGAPQAAAPAPAAHVAGNPGGDAAPAATGTAAAASLATAAGS) are enriched in low complexity. A CSD domain is found at 93-157 (GTVKWFNVRN…GEKGAEAANV (65 aa)). Ser134, Ser201, Ser203, and Ser204 each carry phosphoserine. The disordered stretch occupies residues 181–372 (YYGRRRGPPR…APPTQQSSAE (192 aa)). A compositionally biased stretch (basic residues) spans 222–238 (QLRRPQYRPQYRQRRFP). Omega-N-methylarginine is present on Arg251. Over residues 314–324 (QQATSGPNQPS) the composition is skewed to polar residues. Ser324 is modified (phosphoserine). An Omega-N-methylarginine modification is found at Arg326. A compositionally biased stretch (basic residues) spans 327 to 340 (RGYRRPYNYRRRPR). Residues Ser346, Ser369, and Ser370 each carry the phosphoserine modification.

Found in a mRNP complex with YBX2. Interacts with RRP1B. As to expression, highly expressed in skeletal muscle and heart.

It localises to the cytoplasm. The protein localises to the nucleus. Binds to the GM-CSF promoter. Seems to act as a repressor. Also binds to full-length mRNA and to short RNA sequences containing the consensus site 5'-UCCAUCA-3'. May have a role in translation repression. The polypeptide is Y-box-binding protein 3 (YBX3) (Homo sapiens (Human)).